The primary structure comprises 911 residues: MDYKDTLLLPKTTFPMRGNLPQNEPKKYKKWFSEHVYERMKQNRVGNDKFNLHDGPPYANGHIHIGHALNKILKDMIVKYYYFQGFDVRYTPGWDCHGLPIEQQVEKKIGREKKESLPKSKVRELCRQHAAKFIEIQKEEFQNLGVIGDWDNPYKTMDFEFEANIYKALAEIAKKGLLVERSKPVFWCMHDKTALAEAEVEYEDKEDYSIYVAFPLSNEAKSKLGIDNASIVIWTTTPWTLPANMGIALNPEEKYVLSEDGKIVAKELYENLKEAEVVSGEIVKEFDASELENLKAINPLNGRESVIILGEHVTMDGGTGCVHTAPGHGEEDYRVWLKYGFSEILQPVDDEGKYSNLIVTEKLLPEEFKGMHIFEANPKILDLLGDNLVKVSKFTHSYPHCWRCHNPVIFRATKQFFIAMDKEVNGDTLRHRALSEIEKVEFTPKTGKNRLSTMVANRPDWCISRQRDWGVPIAFFRNKDTGELIIDDEIIENVYEIFKVKGADAWYDLSIEELLPESKKEMASKLEKVNDILDVWFDSGSTWFAVLKNGPYDAGEYPANMYLEGSDQHRGWFQSSLLVSTSIEERAPYKSILTHGFTVDEKGEKMSKSKGNVVAPQEVSKKFGTEILRLWVATSDYSGDIKISDGILKQVAEQYRKIRNTIRFLLANVNDLEEIKLTNPSMIDRWILARSKEVFDEVVALFGKYDFSKAFNILNNFIVTELSAIYMDVCKDRLYCEPLNSEKRRNSQSTMAVIVKELISLLAPVLTYTMDEAVEHAPKVIKEDAKDVFDFVYTPLTAVENPIDEEILEIRRRFFEIVDRLKKEKVIKDTLELAIETNYDKLLVDEMADFFVVSLISDNIEGETLDEFHISDEQFVVKIKRSPLHKCPRCWRYLAEEEGALCERCEKAING.

A 'HIGH' region motif is present at residues 57–67; sequence PYANGHIHIGH. Residue Glu564 coordinates L-isoleucyl-5'-AMP. A 'KMSKS' region motif is present at residues 605 to 609; that stretch reads KMSKS. Lys608 contacts ATP. 4 residues coordinate Zn(2+): Cys887, Cys890, Cys902, and Cys905.

It belongs to the class-I aminoacyl-tRNA synthetase family. IleS type 1 subfamily. Monomer. Zn(2+) is required as a cofactor.

It is found in the cytoplasm. It carries out the reaction tRNA(Ile) + L-isoleucine + ATP = L-isoleucyl-tRNA(Ile) + AMP + diphosphate. Catalyzes the attachment of isoleucine to tRNA(Ile). As IleRS can inadvertently accommodate and process structurally similar amino acids such as valine, to avoid such errors it has two additional distinct tRNA(Ile)-dependent editing activities. One activity is designated as 'pretransfer' editing and involves the hydrolysis of activated Val-AMP. The other activity is designated 'posttransfer' editing and involves deacylation of mischarged Val-tRNA(Ile). In Nautilia profundicola (strain ATCC BAA-1463 / DSM 18972 / AmH), this protein is Isoleucine--tRNA ligase.